The following is a 135-amino-acid chain: Large ribosomal subunit protein bL19 (135 aa).

This sequence belongs to the bacterial ribosomal protein bL19 family.

Functionally, this protein is located at the 30S-50S ribosomal subunit interface and may play a role in the structure and function of the aminoacyl-tRNA binding site. The sequence is that of Large ribosomal subunit protein bL19 from Xanthomonas campestris pv. campestris (strain 8004).